The sequence spans 467 residues: UDP-N-acetylmuramate--L-alanine ligase (467 aa).

ATP is bound at residue 114–120 (GTHGKTT).

This sequence belongs to the MurCDEF family.

Its subcellular location is the cytoplasm. It carries out the reaction UDP-N-acetyl-alpha-D-muramate + L-alanine + ATP = UDP-N-acetyl-alpha-D-muramoyl-L-alanine + ADP + phosphate + H(+). It participates in cell wall biogenesis; peptidoglycan biosynthesis. Cell wall formation. In Rhodopseudomonas palustris (strain BisA53), this protein is UDP-N-acetylmuramate--L-alanine ligase.